The chain runs to 1032 residues: Calmodulin-binding transcription activator 3 (1032 aa).

The CG-1 DNA-binding region spans 15–141 (VGQILSEARH…YLEVKGSRVS (127 aa)). Residues 146–197 (RMQRTEDAARSPQETGDALTSEHDGYASCSFNQNDHSNHSQTTDSASVNGFH) form a disordered region. Over residues 174–195 (CSFNQNDHSNHSQTTDSASVNG) the composition is skewed to polar residues. S272 carries the phosphoserine modification. ANK repeat units follow at residues 661–690 (GGQG…SVDF), 694–723 (NGWT…APGT), and 733–762 (SGST…RAHV). IQ domains follow at residues 852-881 (VQAA…RIIK) and 875-904 (TRQR…SVGV). Residues 900–922 (WSVGVLEKVILRWRRKGAGLRGF) are calmodulin-binding. Positions 945–987 (KQGRKQTEDRLQKALARVKSMVQYPEARDQYRRLLNVVNDIQE) form a coiled coil. The residue at position 964 (S964) is a Phosphoserine.

It belongs to the CAMTA family. As to quaternary structure, interacts with SR1IP1. Interacts with DSC1. Post-translationally, ubiquinated during pathogen infection. Ubiquitination leads to its subsequent proteasome-dependent degradation, thus allowing the establishment of plant defense response. As to expression, expressed in roots, stems, leaves, carpels, and siliques, but not in stigmas or other parts of the flower.

It is found in the nucleus. Transcription activator that binds to the DNA consensus sequence 5'-[ACG]CGCG[GTC]-3'. Binds calmodulin in a calcium-dependent manner in vitro. Regulates transcriptional activity in response to calcium signals. Involved in freezing tolerance in association with CAMTA1 and CAMTA2. Required for the cold-induced expression of DREB1B/CBF1, DREB1C/CBF2, ZAT12 and GOLS3. Involved in response to cold. Contributes together with CAMTA5 to the positive regulation of the cold-induced expression of DREB1A/CBF3, DREB1B/CBF1 and DREB1C/CBF2. Involved together with CAMTA2 and CAMTA4 in the positive regulation of a general stress response (GSR). Involved in the regulation of GSR amplitude downstream of MEKK1. Involved in the regulation of a set of genes involved in defense responses against pathogens. Involved in the regulation of both basal resistance and systemic acquired resistance (SAR). Acts as negative regulator of plant immunity. Binds to the promoter of the defense-related gene EDS1 and represses its expression. Binds to the promoter of the defense-related gene NDR1 and represses its expression. Involved in defense against insects. Required for tolerance to the generalist herbivore Trichoplusia ni, and contributes to the positive regulation of genes associated with glucosinolate metabolism. Required for tolerance to Bradysia impatiens larvae. Mediates herbivore-induced wound response. Required for wound-induced jasmonate accumulation. Involved in the regulation of ethylene-induced senescence by binding to the promoter of the senescence-inducer gene EIN3 and repressing its expression. The polypeptide is Calmodulin-binding transcription activator 3 (Arabidopsis thaliana (Mouse-ear cress)).